Here is a 1006-residue protein sequence, read N- to C-terminus: Phosphatidylinositol-3,5-bisphosphate 3-phosphatase MTMR3 (1006 aa).

Over residues 1-10 (MTVTSSAAID) the composition is skewed to low complexity. The segment at 1–29 (MTVTSSAAIDIGGGGGGRRSDRLDSDRTS) is disordered. Positions 18-29 (RRSDRLDSDRTS) are enriched in basic and acidic residues. In terms of domain architecture, Myotubularin phosphatase spans 224-630 (AWKFSEAVDE…INLRVWHEVF (407 aa)). A 1,2-diacyl-sn-glycero-3-phospho-(1D-myo-inositol-3,5-bisphosphate)-binding residues include Asn377, Asn402, and Ile403. Asn377, Asn402, and Ile403 together coordinate a 1,2-diacyl-sn-glycero-3-phospho-(1D-myo-inositol-3-phosphate). Cys463 acts as the Phosphocysteine intermediate in catalysis. Residues Ser464, Asp465, Gly466, Trp467, Asp468, Arg469, Lys505, and Arg509 each contribute to the a 1,2-diacyl-sn-glycero-3-phospho-(1D-myo-inositol-3,5-bisphosphate) site. Positions 464, 465, 466, 467, 468, and 469 each coordinate a 1,2-diacyl-sn-glycero-3-phospho-(1D-myo-inositol-3-phosphate). Arg509 contributes to the a 1,2-diacyl-sn-glycero-3-phospho-(1D-myo-inositol-3-phosphate) binding site. The interval 641–705 (FSPKEERPLS…PSDNTNSLPM (65 aa)) is disordered. Positions 651 to 705 (GCTTPMNTSTSTNLVKSKSSESINSLNVDGSAKESSQQHPTCSTTPSDNTNSLPM) are enriched in polar residues. Residues 818–883 (EGESGHCAYC…ACDSCYDSMH (66 aa)) form an FYVE-type zinc finger. 8 residues coordinate Zn(2+): Cys824, Cys827, Cys845, Cys848, Cys853, Cys856, Cys875, and Cys878. A disordered region spans residues 886–1006 (DLKLSSSSTT…DVLDVNEQPL (121 aa)). 2 stretches are compositionally biased toward low complexity: residues 890–901 (SSSSTTTTSSST) and 913–926 (DNNSDNVSENVSEN). 2 stretches are compositionally biased toward basic and acidic residues: residues 933–954 (VEEKEAEDPIKEAESPSKETKC) and 976–985 (HSRDPLKSID).

The protein belongs to the protein-tyrosine phosphatase family. Non-receptor class myotubularin subfamily. In terms of tissue distribution, expressed in the body wall muscle and in eggs. Expressed in head neurons. Expressed in the intestine. Expressed in pharyngeal cells, vulval muscle cells and cells of the tail region.

The protein resides in the cytoplasm. It is found in the membrane. The catalysed reaction is a 1,2-diacyl-sn-glycero-3-phospho-(1D-myo-inositol-3,5-bisphosphate) + H2O = a 1,2-diacyl-sn-glycero-3-phospho-(1D-myo-inositol-5-phosphate) + phosphate. The enzyme catalyses a 1,2-diacyl-sn-glycero-3-phospho-(1D-myo-inositol-3-phosphate) + H2O = a 1,2-diacyl-sn-glycero-3-phospho-(1D-myo-inositol) + phosphate. It carries out the reaction 1,2-dihexadecanoyl-sn-glycero-3-phospho-(1D-myo-inositol-3-phosphate) + H2O = 1,2-dihexadecanoyl-sn-glycero-3-phospho-(1D-myo-inositol) + phosphate. It catalyses the reaction 1,2-dihexadecanoyl-sn-glycero-3-phospho-(1D-myo-inositol-3,5-phosphate) + H2O = 1,2-dihexadecanoyl-sn-glycero-3-phospho-(1D-myo-inositol-5-phosphate) + phosphate. The catalysed reaction is 1,2-dioctanoyl-sn-glycero-3-phospho-(1-D-myo-inositol-3-phosphate) + H2O = 1,2-dioctanoyl-sn-glycero-3-phospho-(1D-myo-inositol) + phosphate. Inhibited by sodium vanadate and peroxide. In terms of biological role, preferentially dephosphorylates phosphatidylinositol 3-phosphate (PI3P), and has some activity towards phosphatidylinositol 3,5-bisphosphate (PI35P). Positively regulates autophagy and is recruited to autophagosomes by PI3P where it catalyzes PI3P turnover to promote autophagosome maturation. Thought to have a role in maintenance of muscle function. Involved in locomotion and lifespan determination. The sequence is that of Phosphatidylinositol-3,5-bisphosphate 3-phosphatase MTMR3 from Caenorhabditis elegans.